A 559-amino-acid chain; its full sequence is MTDESTAEAGRDFIRDIVAADLASGRHKSIVTRFPPEPNGYLHLGHAKSICLNFGIAEDFGGRCHLRFDDTNPAKEEQEFIDAIQRDVRWLGFDWGEHLYYASDYFEQLYAWAQHLIREGKAYVDDQTQEEIRLARGTLTEPGRNSPFRDRPADENLDLFARMRAGEFPNGARVLRAKIDMAAGNINLRDPVLYRILHATHPRTGNVWSIYPSYDFAHGQSDSIEHITHSVCTLEFEDHRPLYDWFLDNLPVPSRPRQYEFARLNVTHTLLSKRVLTELVRGGHVAGWDDPRMPTLAGLQRRGVPAEALREFVKRIGVAKANSTVDVGMLDFAIREALNRSASRRMAVLRPLKVVIENYPEGQSEELEAVNHPDDPSQGTRRIRFGREIYIEQEDFMENPPKKFFRLSPGREVRLRYAYFITCREVVKNPAGDVLELRCTYDPATRGGNAPDGRKVKATMHWVNTADAVPAEVRLYGHLFETEQPDAANFASELNPQSVQILSGCMVEPALARDDAGAAVQFERQGYFYRDRDSAPGRLVFNRTVGLRDTWAKVAAAGS.

The 'HIGH' region signature appears at 36 to 46; it reads PEPNGYLHLGH. ATP-binding positions include 37-39 and 43-49; these read EPN and HLGHAKS. L-glutamine-binding residues include Asp-69 and Tyr-214. ATP contacts are provided by residues Thr-233, 263 to 264, and 271 to 273; these read RL and LSK. Residues 270-274 carry the 'KMSKS' region motif; the sequence is LLSKR.

Belongs to the class-I aminoacyl-tRNA synthetase family. As to quaternary structure, monomer.

The protein resides in the cytoplasm. It catalyses the reaction tRNA(Gln) + L-glutamine + ATP = L-glutaminyl-tRNA(Gln) + AMP + diphosphate. In Nitrobacter winogradskyi (strain ATCC 25391 / DSM 10237 / CIP 104748 / NCIMB 11846 / Nb-255), this protein is Glutamine--tRNA ligase.